The following is a 740-amino-acid chain: Melanoma-associated antigen D4 (740 aa).

The span at 1–11 (MAEGSYRKESE) shows a compositional bias: basic and acidic residues. Disordered stretches follow at residues 1–27 (MAEG…EVGE), 139–208 (ATHQ…GPST), 242–298 (PAGV…ALAK), and 321–377 (IPEP…ASQP). The segment covering 14-27 (NVEDMDEGSDEVGE) has biased composition (acidic residues). 2 stretches are compositionally biased toward polar residues: residues 141-155 (HQAS…TSAA) and 162-175 (PETS…SRML). Positions 185–207 (APARSPQPQTSSQAQEAAAEGPS) are enriched in low complexity. Residues 321-337 (IPEPESAAATSQQSAEP) are compositionally biased toward low complexity. Over residues 354-363 (DEYESGEEER) the composition is skewed to acidic residues. Residues 414–612 (LQERANKLVK…REWRAHFLEA (199 aa)) enclose the MAGE domain. A disordered region spans residues 697–722 (WRAGVSSGTNGAASASMLDGPSTSST).

As to quaternary structure, interacts with TRIM27.

May enhance ubiquitin ligase activity of RING-type zinc finger-containing E3 ubiquitin-protein ligases. Proposed to act through recruitment and/or stabilization of the Ubl-conjugating enzyme (E2) at the E3:substrate complex. This Bos taurus (Bovine) protein is Melanoma-associated antigen D4 (MAGED4).